The sequence spans 115 residues: MSSENLSDTQMEYEDEKQDSQEKNANLVKGEEVKLKAKYPGLGQKPGGSDFLMKRLQKGQKYFDSGDYNMAKAKMKNKQLPVAGPDKNLVTGDHIPTPQDLPQRRSSLVTSKLAG.

The span at Met1–Gln10 shows a compositional bias: polar residues. Residues Met1–Leu27 form a disordered region. Ser65 carries the post-translational modification Phosphoserine; by GWL. A disordered region spans residues Asn77–Gly115. Residues Arg104–Gly115 are compositionally biased toward polar residues.

Belongs to the endosulfine family. In terms of processing, phosphorylation at Ser-65 by gwl during mitosis is essential for interaction with ppp2r2d (PR55-delta) and subsequent inactivation of PP2A.

The protein localises to the cytoplasm. In terms of biological role, protein phosphatase inhibitor that specifically inhibits protein phosphatase 2A (PP2A) during mitosis. When phosphorylated at Ser-67 during mitosis, specifically interacts with ppp2r2d (PR55-delta) and inhibits its activity, leading to inactivation of PP2A, an essential condition to keep cyclin-B1-CDK1 activity high during M phase. This is Alpha-endosulfine (ensa) from Salmo salar (Atlantic salmon).